The following is a 113-amino-acid chain: MFSIRISTVVLAASALLAVAIPMTNTETPQCNTGPIQCCNSVQSATSSAAAGPLAALGVLSGIASLLGEVGLDCSPLQVIGVGANSCSSQAACCTGNTFNGAVVLGCSPIKLL.

The signal sequence occupies residues 1–26; the sequence is MFSIRISTVVLAASALLAVAIPMTNT. 4 disulfides stabilise this stretch: Cys31–Cys93, Cys38–Cys87, Cys39–Cys74, and Cys94–Cys107.

It belongs to the fungal hydrophobin family. Self-assembles to form functional amyloid fibrils called rodlets. Self-assembly into fibrillar rodlets occurs spontaneously at hydrophobic:hydrophilic interfaces and the rodlets further associate laterally to form amphipathic monolayers. In terms of tissue distribution, expressed in the fruiting bodies but not in vegetative mycelium.

Its subcellular location is the secreted. It localises to the cell wall. In terms of biological role, aerial growth, conidiation, and dispersal of filamentous fungi in the environment rely upon a capability of their secreting small amphipathic proteins called hydrophobins (HPBs) with low sequence identity. Class I can self-assemble into an outermost layer of rodlet bundles on aerial cell surfaces, conferring cellular hydrophobicity that supports fungal growth, development and dispersal; whereas Class II form highly ordered films at water-air interfaces through intermolecular interactions but contribute nothing to the rodlet structure. POH1 is a class I hydrophobin that is involved in the formation of mycelium knots and subsequent fruiting bodies. This chain is Class I hydrophobin POH1, found in Pleurotus ostreatus (Oyster mushroom).